We begin with the raw amino-acid sequence, 158 residues long: Sorbin and SH3 domain-containing protein 2 (158 aa).

One can recognise a SoHo domain in the interval 1–46 (MRAATPLQTVDRPKDWYKTMFKQIHMVHKPDDDTDMYNTPYTYNAG). The interval 28–158 (HKPDDDTDMY…TKPQAGRRKV (131 aa)) is disordered. The segment covering 50-66 (SPYSAQSHPAAKTQTYR) has biased composition (polar residues). The span at 71 to 81 (SHSDNGTDAFK) shows a compositional bias: basic and acidic residues. Residue S73 is modified to Phosphoserine. Pro residues predominate over residues 86–99 (PVPPPHVPPPVPPL). A compositionally biased stretch (basic and acidic residues) spans 100-136 (RPRDRSSTEKHDWDPPDRKVDTRKFRSEPRSIFEYEP). A153 is subject to Alanine amide.

In terms of assembly, interacts with ABL1/c-Abl, ABL2/v-Abl/Arg, ACTN, AKT1, CBL, PALLD and PAK1. Interacts with ABL, CBL, DNM1, DNM2, FLOT1, AFDN, PTK2B/PYK2, SAPAP, SPTAN1, SYNJ1, SYNJ2, VCL/vinculin, and WASF. Interacts with PTPN12 and WASF1 via its SH3 domains; this interaction may mediate the partial PTPN12 and WASF1 translocation to focal adhesion sites. Post-translationally, ubiquitinated by CBL. In terms of processing, dephosphorylated by PTPN12. Expressed in duodenum.

The protein localises to the cytoplasm. Its subcellular location is the perinuclear region. It is found in the apical cell membrane. The protein resides in the cell junction. It localises to the focal adhesion. The protein localises to the cell projection. Its subcellular location is the lamellipodium. Functionally, adapter protein that plays a role in the assembling of signaling complexes, being a link between ABL kinases and actin cytoskeleton. Can form complex with ABL1 and CBL, thus promoting ubiquitination and degradation of ABL1 or with AKT1 and PAK1, thus mediating AKT1-mediated activation of PAK1. May play a role in the regulation of pancreatic cell adhesion, possibly by acting on WASF1 phosphorylation, enhancing phosphorylation by ABL1, as well as dephosphorylation by PTPN12. Increases water and sodium absorption in the intestine and gall-bladder. The chain is Sorbin and SH3 domain-containing protein 2 (SORBS2) from Sus scrofa (Pig).